The following is a 377-amino-acid chain: Queuine tRNA-ribosyltransferase (377 aa).

Aspartate 89 serves as the catalytic Proton acceptor. Residues 89-93 (DSGGF), aspartate 143, glutamine 188, and glycine 215 each bind substrate. The tract at residues 246 to 252 (GVGKPED) is RNA binding. Residue aspartate 265 is the Nucleophile of the active site. Residues 270–274 (TRNAR) are RNA binding; important for wobble base 34 recognition. Zn(2+) is bound by residues cysteine 303, cysteine 305, cysteine 308, and histidine 334.

Belongs to the queuine tRNA-ribosyltransferase family. Homodimer. Within each dimer, one monomer is responsible for RNA recognition and catalysis, while the other monomer binds to the replacement base PreQ1. The cofactor is Zn(2+).

It catalyses the reaction 7-aminomethyl-7-carbaguanine + guanosine(34) in tRNA = 7-aminomethyl-7-carbaguanosine(34) in tRNA + guanine. The protein operates within tRNA modification; tRNA-queuosine biosynthesis. Catalyzes the base-exchange of a guanine (G) residue with the queuine precursor 7-aminomethyl-7-deazaguanine (PreQ1) at position 34 (anticodon wobble position) in tRNAs with GU(N) anticodons (tRNA-Asp, -Asn, -His and -Tyr). Catalysis occurs through a double-displacement mechanism. The nucleophile active site attacks the C1' of nucleotide 34 to detach the guanine base from the RNA, forming a covalent enzyme-RNA intermediate. The proton acceptor active site deprotonates the incoming PreQ1, allowing a nucleophilic attack on the C1' of the ribose to form the product. After dissociation, two additional enzymatic reactions on the tRNA convert PreQ1 to queuine (Q), resulting in the hypermodified nucleoside queuosine (7-(((4,5-cis-dihydroxy-2-cyclopenten-1-yl)amino)methyl)-7-deazaguanosine). The chain is Queuine tRNA-ribosyltransferase from Acinetobacter baumannii (strain SDF).